A 116-amino-acid polypeptide reads, in one-letter code: Iron-sulfur cluster insertion protein ErpA (116 aa).

Cysteine 44, cysteine 108, and cysteine 110 together coordinate iron-sulfur cluster.

It belongs to the HesB/IscA family. As to quaternary structure, homodimer. Requires iron-sulfur cluster as cofactor.

Required for insertion of 4Fe-4S clusters for at least IspG. The protein is Iron-sulfur cluster insertion protein ErpA of Shewanella baltica (strain OS223).